The following is a 418-amino-acid chain: Phosphatidylcholine:ceramide cholinephosphotransferase 1 (418 aa).

Residues 12 to 75 (WSPKKVADWL…LDMIETLKME (64 aa)) form the SAM domain. S13 is subject to Phosphoserine. The next 5 membrane-spanning stretches (helical) occupy residues 141 to 161 (FLAFLYALSCFVLTTVMISVV), 189 to 209 (FSICEINGMILVGLWLIQWLL), 220 to 240 (FFCIVGTLYLYRCITMYVTTL), 281 to 301 (MCGDYLYSGHTVMLTLTYLFI), and 309 to 329 (LWWYHWICWLLSVVGIFCILL). H290 is an active-site residue. Active-site residues include H333 and D337. Residues 335–352 (TVDVVVAYYITTRLFWWY) form a helical membrane-spanning segment.

It belongs to the sphingomyelin synthase family. As to expression, widely expressed. Highest expression in the cardiovascular system.

The protein localises to the golgi apparatus membrane. The enzyme catalyses an N-acylsphing-4-enine + a 1,2-diacyl-sn-glycero-3-phosphocholine = a sphingomyelin + a 1,2-diacyl-sn-glycerol. It carries out the reaction 1-(9Z-octadecenoyl)-2-acyl-sn-3-glycerol + a sphingomyelin = a 1-(9Z-octadecenoyl)-2-acyl-sn-glycero-3-phosphocholine + an N-acylsphing-4-enine. It catalyses the reaction N-hexadecanoylsphinganine + a 1,2-diacyl-sn-glycero-3-phosphocholine = N-hexadecanoyl-sphinganine-1-phosphocholine + a 1,2-diacyl-sn-glycerol. The catalysed reaction is N-hexadecanoyl-(4R)-hydroxysphinganine + a 1,2-diacyl-sn-glycero-3-phosphocholine = N-hexadecanoyl-(4R)-hydroxysphinganine-phosphocholine + a 1,2-diacyl-sn-glycerol. The enzyme catalyses an N-acylsphing-4-enine + a 1,2-diacyl-sn-glycero-3-phosphoethanolamine = an N-acylsphing-4-enine 1-phosphoethanolamine + a 1,2-diacyl-sn-glycerol. It functions in the pathway sphingolipid metabolism. Its function is as follows. Major sphingomyelin synthase at the Golgi apparatus. Catalyzes the reversible transfer of phosphocholine moiety in sphingomyelin biosynthesis: in the forward reaction transfers phosphocholine head group of phosphatidylcholine (PC) on to ceramide (CER) to form ceramide phosphocholine (sphingomyelin, SM) and diacylglycerol (DAG) as by-product, and in the reverse reaction transfers phosphocholine from SM to DAG to form PC and CER. The direction of the reaction depends on the levels of CER and DAG in Golgi membranes. Converts the newly synthesized CER, that is transported from the endoplasmic reticulum to the trans-Golgi by the Cer transport protein (CERT), to SM. Can form a heteromeric complex with glucosylceramide synthase (GCS) increasing SMS activity and reducing glucosylceramide synthesis, a critical mechanism that controls the metabolic fate of CER in the Golgi. Does not use free phosphorylcholine or CDP-choline as donor. Can also transfer phosphoethanolamine head group of phosphatidylethanolamine (PE) on to CER to form ceramide phosphoethanolamine (CPE). Regulates receptor-mediated signal transduction via mitogenic DAG and proapoptotic CER, as well as via SM, a structural component of membrane rafts that serve as platforms for signal transduction and protein sorting. Plays a role in secretory transport via regulation of DAG pool at the Golgi apparatus and its downstream effects on PRKD1. This Sus scrofa (Pig) protein is Phosphatidylcholine:ceramide cholinephosphotransferase 1 (SGMS1).